Reading from the N-terminus, the 501-residue chain is MKTSVMDLKVEPMDIDFDQPPPLQVFAHTSTLHGISHIFSYEKITAKCCLWVVFFLSSLTFLMYVCIDRIQFYLEYPHVTKLDEITTPVMVFPAVTICNLNSIRFSRITRNDLYHAGELLALLNSRHEVREAHLVEESVMEVLKSKTDFRSFKPRHFNMWEFYNRTGHDIKDMLLSCQFRGSPCRPEDFSVVFTRYGKCYTFNSGETGPPRVSVKGGMGNGLEIMLDIQQDEYLPVWGESDESSFEAGIKVQIHSQDEPPFIDQLGFGVAPGFQTFVSCQEQRLVYLPAPWGSCKSTPPSSDYFRAYSISACRTDCETRYLVENCNCRMVHMPGDAPYCTPVLYKECAHPALDFLVETDSDYCSCETPCNITRYSKELSFVKIPSKASVKYLAKKYSKSEKYITENVMVLDVFFEALNYETIEQRKAYEVAGLLGDIGGQMGLFIGASILTILELFDYLYEVMKYRLCRCSNKKHHNNNNNTDHNAVFSLDDVNCHVSKFH.

Residues 1–54 lie on the Cytoplasmic side of the membrane; the sequence is MKTSVMDLKVEPMDIDFDQPPPLQVFAHTSTLHGISHIFSYEKITAKCCLWVVF. The helical transmembrane segment at 55–71 threads the bilayer; the sequence is FLSSLTFLMYVCIDRIQ. Residues 72–429 lie on the Extracellular side of the membrane; the sequence is FYLEYPHVTK…ETIEQRKAYE (358 aa). Intrachain disulfides connect cysteine 98-cysteine 199, cysteine 177-cysteine 184, cysteine 294-cysteine 369, cysteine 312-cysteine 365, cysteine 316-cysteine 363, cysteine 325-cysteine 347, and cysteine 327-cysteine 339. Asparagine 164 is a glycosylation site (N-linked (GlcNAc...) asparagine). Asparagine 370 carries N-linked (GlcNAc...) asparagine glycosylation. A discontinuously helical transmembrane segment spans residues 430 to 460; sequence VAGLLGDIGGQMGLFIGASILTILELFDYLY. The short motif at 446-448 is the GAS motif; ion selectivity filter element; that stretch reads GAS. Topologically, residues 461-501 are cytoplasmic; the sequence is EVMKYRLCRCSNKKHHNNNNNTDHNAVFSLDDVNCHVSKFH.

Belongs to the amiloride-sensitive sodium channel (TC 1.A.6) family. ASIC1 subfamily. Homotrimer. Heterotrimer; with other ASIC proteins producing channel with different properties. Interacts with asic1c. As to expression, expressed in central nervous system. Faintly expressed in the trunk, presumably in dorsal root ganglia.

The protein resides in the cell membrane. The protein localises to the postsynaptic cell membrane. It localises to the cell projection. It is found in the dendrite. It catalyses the reaction Na(+)(in) = Na(+)(out). The enzyme catalyses K(+)(in) = K(+)(out). The catalysed reaction is Li(+)(in) = Li(+)(out). It carries out the reaction Ca(2+)(in) = Ca(2+)(out). Its activity is regulated as follows. Inhibited by the diuretic drug amiloride. Functionally, forms voltage-independent, pH-gated trimeric sodium channels that act as postsynaptic excitatory receptors in the nervous system, playing a crucial role in regulating synaptic plasticity, learning, and memory. Upon extracellular pH drop this channel elicits transient, fast activating, and completely desensitizing inward currents. Displays high selectivity for sodium ions but can also permit the permeation of other cations. This Danio rerio (Zebrafish) protein is Acid-sensing ion channel 1A (asic1a).